The following is a 157-amino-acid chain: Small ribosomal subunit protein uS7 (157 aa).

This sequence belongs to the universal ribosomal protein uS7 family. In terms of assembly, part of the 30S ribosomal subunit. Contacts proteins S9 and S11.

One of the primary rRNA binding proteins, it binds directly to 16S rRNA where it nucleates assembly of the head domain of the 30S subunit. Is located at the subunit interface close to the decoding center, probably blocks exit of the E-site tRNA. The sequence is that of Small ribosomal subunit protein uS7 from Rhodopirellula baltica (strain DSM 10527 / NCIMB 13988 / SH1).